Reading from the N-terminus, the 147-residue chain is uncharacterized protein (147 aa).

This is an uncharacterized protein from Bacillus subtilis (strain 168).